The following is a 244-amino-acid chain: Methylthioribulose-1-phosphate dehydratase (244 aa).

Cys89 contacts substrate. Residues His107 and His109 each coordinate Zn(2+). Catalysis depends on Glu130, which acts as the Proton donor/acceptor. His192 serves as a coordination point for Zn(2+).

This sequence belongs to the aldolase class II family. MtnB subfamily. Zn(2+) serves as cofactor.

It is found in the cytoplasm. It carries out the reaction 5-(methylsulfanyl)-D-ribulose 1-phosphate = 5-methylsulfanyl-2,3-dioxopentyl phosphate + H2O. It functions in the pathway amino-acid biosynthesis; L-methionine biosynthesis via salvage pathway; L-methionine from S-methyl-5-thio-alpha-D-ribose 1-phosphate: step 2/6. Its function is as follows. Catalyzes the dehydration of methylthioribulose-1-phosphate (MTRu-1-P) into 2,3-diketo-5-methylthiopentyl-1-phosphate (DK-MTP-1-P). The polypeptide is Methylthioribulose-1-phosphate dehydratase (Saccharomyces cerevisiae (strain YJM789) (Baker's yeast)).